Consider the following 168-residue polypeptide: Urease accessory protein UreE (168 aa).

The segment at 137–168 (PESGAYHGTTGHGGGHSHSHGHSHDHHHDHSH) is disordered. A compositionally biased stretch (basic residues) spans 151–161 (GHSHSHGHSHD).

This sequence belongs to the UreE family.

The protein resides in the cytoplasm. Involved in urease metallocenter assembly. Binds nickel. Probably functions as a nickel donor during metallocenter assembly. The sequence is that of Urease accessory protein UreE from Saccharophagus degradans (strain 2-40 / ATCC 43961 / DSM 17024).